The sequence spans 561 residues: Carboxylesterase 1F (561 aa).

The signal sequence occupies residues 1–17; sequence MFLSTLFLVSLATCVIC. Cysteine 87 and cysteine 116 are oxidised to a cystine. The active-site Acyl-ester intermediate is serine 221. A disulfide bond links cysteine 273 and cysteine 284. Active-site charge relay system residues include glutamate 353 and histidine 466. The Prevents secretion from ER signature appears at 558–561; sequence HNEL.

The protein belongs to the type-B carboxylesterase/lipase family. As to expression, expressed in liver, white and brown adipose tissue, kidney, intestine, adrenal, heart and ovary. Not detected in muscle, lung, testis, brain and spleen.

It localises to the lipid droplet. Its subcellular location is the cytoplasm. The protein resides in the cytosol. The protein localises to the endoplasmic reticulum. It is found in the microsome. The catalysed reaction is a carboxylic ester + H2O = an alcohol + a carboxylate + H(+). The enzyme catalyses all-trans-retinyl hexadecanoate + H2O = all-trans-retinol + hexadecanoate + H(+). Involved in the detoxification of xenobiotics and in the activation of ester and amide prodrugs. Hydrolyzes retinyl esters. Hydrolyzes p-nitrophenyl butyrate (PNPB), triacylglycerol and monoacylglycerol. Shows higher activity against PNPB, a short-chain fatty acid ester, than against triolein, a long-chain fatty acid ester. Shows no detectable activity against diacylglycerol, cholesterol ester or phospholipids. May play a role in adipocyte lipolysis. This chain is Carboxylesterase 1F, found in Mus musculus (Mouse).